The sequence spans 1380 residues: MAQTLSFNGRRRVRKFFGKIPEVAEMPNLIEVQKASYDQFLMVDEPQGGRPDEGLQAVFKSVFPIKDFSGASMLEFVSYEFEAPKFDVEECRQRDLTYAAPLKVTLRLIVFDIDEDTGAKSIKDIKEQNVYMGDMPLMTDNGTFIVNGTERVIVSQMHRSPGVFFDHDKGKSHSSGKLLFAARVIPYRGSWLDIEFDAKDIVHARIDRRRKIPVTSLLMALGMDGEEILDTFYTKSLYQRDGEGWRVPFQPDALKGQKALADLIDADTGEVVVEGGKKLTPRLLRQLQDKGLKALKATDDDLYGNYLAEDVVNFETGEIYLEAGDEIDEKTLPVILSAGFDEIPVLDIDHINIGAYIRNTLAADKNENRQDALFDIYRVMRPGEPPTMDSAEAMFNALFFDAERYDLSAVGRVKMNMRLDLDVPDTVRTLRKEDILAVVKMLVELRDGKGEIDDIDNLGNRRVRSVGELMENQYRLGLLRMERAIKERMSSIEIDTVMPQDLINAKPAAAAVREFFGSSQLSQFMDQVNPLSEITHKRRLSALGPGGLTRERAGFEVRDVHPTHYGRICPIETPEGPNIGLINSLATFARVNKYGFIESPYRKIVDGKVTSDVVYLSAMEEAKYHVAQANSVLDEDGSFSEEFVVCRHAGEVMLAPRDNINLMDVSPKQLVSVAAALIPFLENDDANRALMGSNMQRQAVPLLRAEAPFVGTGMEPVVARDSGAAIAARRGGIVDQVDATRIVIRATEDLDPSKSGVDIYRLQKFQRSNQNTCVNQRPLVTVGDVLNKGDIIADGPSTDLGDLALGRNALVAFMPWNGYNYEDSILLSERIVRDDVFTSIHIEEFEVMARDTKLGPEEITRDIPNVSEEALKNLDEAGIVYIGAEVQPGDILVGKITPKGESPMTPEEKLLRAIFGEKASDVRDTSMRMPPGTFGTVVEVRVFNRHGVEKDERAMAIEREEIERLAKDRDDEQAILDRNVYARLVDMLRGHVAVAGPKGFKKGTELSNAVISEYPRSQWWMFAIEDEKAQGEIEALRGQYDESKSRLEQRFMDKVEKVQRGDEMPPGVMKMVKVFVAVKRKIQPGDKMAGRHGNKGVVSRIVPIEDMPFLEDGTHVDVVLNPLGVPSRMNVGQILETHLGWACAGMGKKIGAMLDAYKAGADIQPLRDTIDSVIGSGPKGEPIKQYDDESIVRLAEQTRRGVSIATPVFDGAVEADVNEMLEQAGLKVTGQSTLYDGRTGETFDRQVTVGYIYMLKLNHLVDDKIHARSIGPYSLVTQQPLGGKAQFGGQRFGEMEVWALEAYGAAYTLQEMLTVKSDDVAGRTKVYEAIVRGDDTFEAGIPESFNVLVKEMRSLGLSVELENSKVDEVGASAQLPDAAE.

It belongs to the RNA polymerase beta chain family. As to quaternary structure, the RNAP catalytic core consists of 2 alpha, 1 beta, 1 beta' and 1 omega subunit. When a sigma factor is associated with the core the holoenzyme is formed, which can initiate transcription.

It carries out the reaction RNA(n) + a ribonucleoside 5'-triphosphate = RNA(n+1) + diphosphate. DNA-dependent RNA polymerase catalyzes the transcription of DNA into RNA using the four ribonucleoside triphosphates as substrates. The chain is DNA-directed RNA polymerase subunit beta from Sinorhizobium medicae (strain WSM419) (Ensifer medicae).